Consider the following 225-residue polypeptide: pH-response regulator palI/RIM9 homolog 2 (225 aa).

Topologically, residues 1–4 (MLVK) are cytoplasmic. The chain crosses the membrane as a helical span at residues 5 to 25 (IVLVVLLTLALVFECFSTISV). At 26 to 87 (PITIGLYISE…PNHAKYALSN (62 aa)) the chain is on the extracellular side. Residues 88 to 108 (LLLVHVLAFVCVTILWVFGML) form a helical membrane-spanning segment. Topologically, residues 109 to 120 (TCFRCIKTSRRM) are cytoplasmic. The chain crosses the membrane as a helical span at residues 121-141 (LIIAVLWSMLTFMVTLLGFLI). At 142–153 (DILIFSSHVTWC) the chain is on the extracellular side. Residues 154 to 174 (TWLTLASAFFTVLSGTVLCVM) traverse the membrane as a helical segment. Residues 175–225 (RRNLTYDKFLESKPEKHGVYVPLCRLNDVEELEIPWCNTMNHQALTAPTPM) lie on the Cytoplasmic side of the membrane.

Belongs to the palI/RIM9 family.

It localises to the cell membrane. In terms of biological role, required for the proteolytic cleavage of the transcription factor RIM101 in response to alkaline ambient pH. The protein is pH-response regulator palI/RIM9 homolog 2 of Kluyveromyces lactis (strain ATCC 8585 / CBS 2359 / DSM 70799 / NBRC 1267 / NRRL Y-1140 / WM37) (Yeast).